The following is a 196-amino-acid chain: ATP-dependent Clp protease proteolytic subunit (196 aa).

The Nucleophile role is filled by serine 96. The active site involves histidine 121.

The protein belongs to the peptidase S14 family. In terms of assembly, fourteen ClpP subunits assemble into 2 heptameric rings which stack back to back to give a disk-like structure with a central cavity, resembling the structure of eukaryotic proteasomes.

The protein localises to the cytoplasm. The catalysed reaction is Hydrolysis of proteins to small peptides in the presence of ATP and magnesium. alpha-casein is the usual test substrate. In the absence of ATP, only oligopeptides shorter than five residues are hydrolyzed (such as succinyl-Leu-Tyr-|-NHMec, and Leu-Tyr-Leu-|-Tyr-Trp, in which cleavage of the -Tyr-|-Leu- and -Tyr-|-Trp bonds also occurs).. In terms of biological role, cleaves peptides in various proteins in a process that requires ATP hydrolysis. Has a chymotrypsin-like activity. Plays a major role in the degradation of misfolded proteins. This chain is ATP-dependent Clp protease proteolytic subunit, found in Streptococcus pneumoniae (strain P1031).